Here is a 161-residue protein sequence, read N- to C-terminus: Protein-export protein SecB (161 aa).

Belongs to the SecB family. Homotetramer, a dimer of dimers. One homotetramer interacts with 1 SecA dimer.

It localises to the cytoplasm. Functionally, one of the proteins required for the normal export of preproteins out of the cell cytoplasm. It is a molecular chaperone that binds to a subset of precursor proteins, maintaining them in a translocation-competent state. It also specifically binds to its receptor SecA. This chain is Protein-export protein SecB, found in Shewanella sp. (strain MR-7).